The sequence spans 349 residues: N-formyl peptide receptor 3 (349 aa).

Over M1–I27 the chain is Extracellular. 2 N-linked (GlcNAc...) asparagine glycosylation sites follow: N4 and N10. The chain crosses the membrane as a helical span at residues F28 to V50. Residues A51–T61 lie on the Cytoplasmic side of the membrane. A helical membrane pass occupies residues I62–V83. The Extracellular segment spans residues S84–L100. C98 and C176 are oxidised to a cystine. Residues V101–L121 form a helical membrane-spanning segment. At D122–S140 the chain is on the cytoplasmic side. The helical transmembrane segment at L141 to I162 threads the bilayer. The Extracellular segment spans residues F163–H205. The chain crosses the membrane as a helical span at residues F206–A226. The Cytoplasmic portion of the chain corresponds to K227–V242. The helical transmembrane segment at F243 to V266 threads the bilayer. Residues W267–P286 are Extracellular-facing. The helical transmembrane segment at T287–G306 threads the bilayer. Residues R307 to E349 are Cytoplasmic-facing. The interval E327–E349 is disordered. Residues S331–S343 are compositionally biased toward polar residues.

Belongs to the G-protein coupled receptor 1 family.

The protein localises to the cell membrane. Low affinity receptor for N-formyl-methionyl peptides, which are powerful neutrophils chemotactic factors. Binding of FMLP to the receptor causes activation of neutrophils. This response is mediated via a G-protein that activates a phosphatidylinositol-calcium second messenger system. The sequence is that of N-formyl peptide receptor 3 (FPR3) from Pan troglodytes (Chimpanzee).